The primary structure comprises 589 residues: Enhancer of polycomb-like protein 1 (589 aa).

4 disordered regions span residues 298–339, 403–430, 468–497, and 516–589; these read GDED…RPAE, MTPPASASSGSMDEPTPMDLDKPKPNPP, LPSPARDLSEEQSDRWKYDQSSDDEDDAPV, and LQTV…QPVS. Basic and acidic residues predominate over residues 474–487; that stretch reads DLSEEQSDRWKYDQ. Residues 557–566 show a composition bias toward low complexity; sequence PQPNQSQSLP. A compositionally biased stretch (pro residues) spans 567–589; that stretch reads LPQPQQPVAQPQPQPQPQAQPVS.

This sequence belongs to the enhancer of polycomb family. Component of the NuA4 histone acetyltransferase complex.

It is found in the nucleus. Its function is as follows. Component of the NuA4 histone acetyltransferase complex which is involved in transcriptional activation of selected genes principally by acetylation of nucleosomal histone H4 and H2A. The NuA4 complex is also involved in DNA repair. Involved in gene silencing by neighboring heterochromatin, blockage of the silencing spreading along the chromosome, and required for cell cycle progression through G2/M. The protein is Enhancer of polycomb-like protein 1 (epl-1) of Neurospora crassa (strain ATCC 24698 / 74-OR23-1A / CBS 708.71 / DSM 1257 / FGSC 987).